The following is a 551-amino-acid chain: Cleavage and polyadenylation specificity factor subunit 6 (551 aa).

The interval Met-1–Gly-213 is necessary for interaction with NXF1. The 81-residue stretch at Ile-81–Lys-161 folds into the RRM domain. The segment at Ile-81–Lys-161 is necessary for interaction with NUDT21/CPSF5. The necessary for nuclear paraspeckles localization stretch occupies residues Ile-81 to Lys-161. Thr-157 is subject to Phosphothreonine. Positions Met-169–Met-180 are enriched in polar residues. Disordered regions lie at residues Met-169–Glu-411 and Leu-477–Arg-551. Residues Arg-202–Arg-206 carry the GAR motif. Residues Phe-207–Gly-219 are compositionally biased toward low complexity. Pro residues-rich tracts occupy residues Pro-220 to Gly-265, Gly-285 to Thr-366, and Gly-377 to Pro-388. Positions Asn-358–Arg-551 are (Microbial infection) Binds to HIV-1 capsid protein p24 (CA). Residues Pro-389–Thr-404 show a composition bias toward basic and acidic residues. Thr-404 and Thr-407 each carry phosphothreonine. A sufficient for nuclear speckle localization region spans residues Thr-404–Arg-551. Residues Ala-405–Arg-551 form a necessary for RNA-binding region. Residues Glu-481–Arg-551 form a necessary for interaction with SRSF3, SRSF7 and TRA2B/SFRS10 region. Residues Ser-489–Arg-503 show a composition bias toward basic and acidic residues. The tract at residues Arg-490–Arg-551 is arg/Ser-rich domain. Residues Ser-494, Ser-500, Ser-511, Ser-513, and Ser-525 each carry the phosphoserine modification. Over residues Glu-504–Arg-514 the composition is skewed to basic residues. Positions Lys-510–Arg-551 are sufficient for nuclear targeting. The span at Asp-515–Arg-551 shows a compositional bias: basic and acidic residues.

Belongs to the RRM CPSF6/7 family. As to quaternary structure, component of the cleavage factor Im (CFIm) complex which is a heterotetramer composed of two subunits of NUDT21/CPSF5 and two subunits of CPSF6 or CPSF7 or a heterodimer of CPSF6 and CPSF7. The cleavage factor Im (CFIm) complex associates with the CPSF and CSTF complexes to promote the assembly of the core mRNA 3'-processing machinery. Associates with the exon junction complex (EJC). Associates with the 80S ribosome particle. Interacts (via the RRM domain) with NUDT21/CPSF5; this interaction is direct and enhances binding to RNA. Interacts (via Arg/Ser-rich domain) with FIP1L1 (preferentially via unphosphorylated form and Arg/Glu/Asp-rich domain); this interaction mediates, at least in part, the interaction between the CFIm and CPSF complexes and may be inhibited by CPSF6 hyper-phosphorylation. Interacts (via N-terminus) with NXF1; this interaction is direct. Interacts with SRSF3. Interacts with SRSF7. Interacts with SNRNP70. Interacts with TRA2B/SFRS10. Interacts with UPF1. Interacts with UPF3B. Interacts with VIRMA. Interacts (via Arg/Ser-rich domain) with TNPO3; promoting nuclear import of CPSF6 independently of its phosphorylation status. Interacts with YTHDC1. (Microbial infection) Interacts (via C-terminus) with HIV-1 capsid protein p24 (CA). Post-translationally, phosphorylated. Phosphorylated in the Arg/Ser-rich domain by SRPK1, in vitro. In terms of processing, symmetrically dimethylated on arginine residues in the GAR motif by PRMT5 in a WDR77- and CLNS1A-dependent manner. Asymmetrically dimethylated on arginine residues in the GAR motif by PRMT1.

The protein localises to the nucleus. It is found in the nucleoplasm. Its subcellular location is the nucleus speckle. The protein resides in the cytoplasm. Functionally, component of the cleavage factor Im (CFIm) complex that functions as an activator of the pre-mRNA 3'-end cleavage and polyadenylation processing required for the maturation of pre-mRNA into functional mRNAs. CFIm contributes to the recruitment of multiprotein complexes on specific sequences on the pre-mRNA 3'-end, so called cleavage and polyadenylation signals (pA signals). Most pre-mRNAs contain multiple pA signals, resulting in alternative cleavage and polyadenylation (APA) producing mRNAs with variable 3'-end formation. The CFIm complex acts as a key regulator of cleavage and polyadenylation site choice during APA through its binding to 5'-UGUA-3' elements localized in the 3'-untranslated region (UTR) for a huge number of pre-mRNAs. CPSF6 enhances NUDT21/CPSF5 binding to 5'-UGUA-3' elements localized upstream of pA signals and promotes RNA looping, and hence activates directly the mRNA 3'-processing machinery. Plays a role in mRNA export. Its function is as follows. (Microbial infection) Binds HIV-1 capsid-nucleocapsid (HIV-1 CA-NC) complexes and might thereby promote the integration of the virus in the nucleus of dividing cells (in vitro). In Homo sapiens (Human), this protein is Cleavage and polyadenylation specificity factor subunit 6.